The following is a 249-amino-acid chain: NADH-quinone oxidoreductase subunit C (249 aa).

The segment at 1 to 29 (MTENQTTPDPGEPGSSADRPGGLVPTGDS) is disordered.

It belongs to the complex I 30 kDa subunit family. In terms of assembly, NDH-1 is composed of 14 different subunits. Subunits NuoB, C, D, E, F, and G constitute the peripheral sector of the complex.

The protein resides in the cell membrane. The enzyme catalyses a quinone + NADH + 5 H(+)(in) = a quinol + NAD(+) + 4 H(+)(out). Its function is as follows. NDH-1 shuttles electrons from NADH, via FMN and iron-sulfur (Fe-S) centers, to quinones in the respiratory chain. The immediate electron acceptor for the enzyme in this species is believed to be a menaquinone. Couples the redox reaction to proton translocation (for every two electrons transferred, four hydrogen ions are translocated across the cytoplasmic membrane), and thus conserves the redox energy in a proton gradient. This Saccharopolyspora erythraea (strain ATCC 11635 / DSM 40517 / JCM 4748 / NBRC 13426 / NCIMB 8594 / NRRL 2338) protein is NADH-quinone oxidoreductase subunit C.